Reading from the N-terminus, the 154-residue chain is Nucleoside diphosphate kinase (154 aa).

ATP is bound by residues Lys-12, Phe-60, Arg-88, Thr-94, Arg-105, and Asn-115. His-118 (pros-phosphohistidine intermediate) is an active-site residue.

It belongs to the NDK family. It depends on Mg(2+) as a cofactor.

The protein resides in the cytoplasm. It carries out the reaction a 2'-deoxyribonucleoside 5'-diphosphate + ATP = a 2'-deoxyribonucleoside 5'-triphosphate + ADP. It catalyses the reaction a ribonucleoside 5'-diphosphate + ATP = a ribonucleoside 5'-triphosphate + ADP. In terms of biological role, major role in the synthesis of nucleoside triphosphates other than ATP. The ATP gamma phosphate is transferred to the NDP beta phosphate via a ping-pong mechanism, using a phosphorylated active-site intermediate. This is Nucleoside diphosphate kinase from Haloarcula marismortui (strain ATCC 43049 / DSM 3752 / JCM 8966 / VKM B-1809) (Halobacterium marismortui).